The primary structure comprises 361 residues: MSLSLGDIKFPDNWDLIPNEKNYIDYVYKESIELEVWRPNNKRDLMAHNNVVSLAKYFWPHVDFNRLVMGGELMVWFFSFDDVLDAGIYTDEKQMDLVKRMDNVFINGTVESDATGPEKMALHLRKKCEVMCGKRRKDTFNRFISSCVQWVDSIIPFNKLRSAQGTSPHLELYSYLRKVNIGAYPCVTLTEVMLDHEIEYYIWSDPKWIKMNEDIAIITTLINDLVSYEKEVNDQAGDLNPLYFLQNQKNIPLPDSYKQVVDLIDFWVKDYQTMEQSLLNEMEFKDSKQRSDMEFILEHLRYLASGSKKWSMQTPRYCSPTSPFIEMRTKPSTPVMNSTKKQKIDHVPSQSFISTPIDLNN.

Positions 81–86 (DDVLDA) match the DDxx(x)D/E motif motif. The NDxxSxxxD/E motif signature appears at 223–231 (NDLVSYEKE).

The protein belongs to the terpene synthase family.

The catalysed reaction is (2E,6E)-farnesyl diphosphate = (2S,3R,6S,9S)-(-)-protoillud-7-ene + diphosphate. Its function is as follows. Terpene synthase that converts its substrate farnesyl diphosphate (FPP) into the sesquiterpene (2S,3R,6S,9S)-(-)-protoillud-7-ene. The polypeptide is Terpene synthase 6 (Dictyostelium discoideum (Social amoeba)).